A 544-amino-acid chain; its full sequence is Transcription factor bHLH119 (544 aa).

2 disordered regions span residues 12 to 59 (NGQV…QPPR) and 185 to 208 (VASTSATRPQSSASLAPTPPPPSV). The span at 15-29 (VVRTSQPQRPSSGKP) shows a compositional bias: polar residues. The segment covering 50–59 (LPLPLLQPPR) has biased composition (pro residues). Thr269 bears the Phosphothreonine mark. Ser274 carries the phosphoserine modification. Disordered stretches follow at residues 342–364 (QGTEEAHGSTSRKRSRAADMHNL) and 522–544 (QPPLPLQGQPTSQPSFSHASTSK). Residues 357 to 406 (RAADMHNLSERRRRERINERMKTLQELLPRCRKTDKVSMLEDVIEYVKSL) enclose the bHLH domain. The segment covering 522-535 (QPPLPLQGQPTSQP) has biased composition (low complexity). Phosphoserine is present on residues Ser541 and Ser543.

As to quaternary structure, homodimer.

It is found in the nucleus. This is Transcription factor bHLH119 (BHLH119) from Arabidopsis thaliana (Mouse-ear cress).